We begin with the raw amino-acid sequence, 1080 residues long: Carbamoyl phosphate synthase large chain (1080 aa).

A carboxyphosphate synthetic domain region spans residues 1-403 (MPKRTDLRTI…SLQKAVRGLE (403 aa)). ATP contacts are provided by Arg129, Arg169, Gly175, Gly176, Glu208, Val210, Glu215, Gly241, Val242, His243, Gln285, and Glu299. The ATP-grasp 1 domain occupies 133-328 (RVAMQEIGLE…IAKIAAKLAV (196 aa)). The Mg(2+) site is built by Gln285, Glu299, and Asn301. 3 residues coordinate Mn(2+): Gln285, Glu299, and Asn301. Positions 404–554 (TGKVGLEPTG…YSTYEEECEA (151 aa)) are oligomerization domain. The interval 555-942 (APSDRRKIMI…AFARAQEAGD (388 aa)) is carbamoyl phosphate synthetic domain. In terms of domain architecture, ATP-grasp 2 spans 679–876 (QKLVQQLGLR…LAKIAARCMT (198 aa)). ATP is bound by residues Arg715, Arg754, Leu756, Glu761, Gly787, Val788, His789, Ser790, Gln830, and Glu847. Mg(2+)-binding residues include Gln830, Glu847, and Asn849. Residues Gln830, Glu847, and Asn849 each contribute to the Mn(2+) site. An MGS-like domain is found at 943-1080 (IRAPQPGRAF…LQELHKELQV (138 aa)). An allosteric domain region spans residues 943 to 1080 (IRAPQPGRAF…LQELHKELQV (138 aa)).

It belongs to the CarB family. As to quaternary structure, composed of two chains; the small (or glutamine) chain promotes the hydrolysis of glutamine to ammonia, which is used by the large (or ammonia) chain to synthesize carbamoyl phosphate. Tetramer of heterodimers (alpha,beta)4. Mg(2+) serves as cofactor. Requires Mn(2+) as cofactor.

It carries out the reaction hydrogencarbonate + L-glutamine + 2 ATP + H2O = carbamoyl phosphate + L-glutamate + 2 ADP + phosphate + 2 H(+). The enzyme catalyses hydrogencarbonate + NH4(+) + 2 ATP = carbamoyl phosphate + 2 ADP + phosphate + 2 H(+). The protein operates within amino-acid biosynthesis; L-arginine biosynthesis; carbamoyl phosphate from bicarbonate: step 1/1. It functions in the pathway pyrimidine metabolism; UMP biosynthesis via de novo pathway; (S)-dihydroorotate from bicarbonate: step 1/3. Large subunit of the glutamine-dependent carbamoyl phosphate synthetase (CPSase). CPSase catalyzes the formation of carbamoyl phosphate from the ammonia moiety of glutamine, carbonate, and phosphate donated by ATP, constituting the first step of 2 biosynthetic pathways, one leading to arginine and/or urea and the other to pyrimidine nucleotides. The large subunit (synthetase) binds the substrates ammonia (free or transferred from glutamine from the small subunit), hydrogencarbonate and ATP and carries out an ATP-coupled ligase reaction, activating hydrogencarbonate by forming carboxy phosphate which reacts with ammonia to form carbamoyl phosphate. The protein is Carbamoyl phosphate synthase large chain of Xylella fastidiosa (strain 9a5c).